A 278-amino-acid chain; its full sequence is 4-diphosphocytidyl-2-C-methyl-D-erythritol kinase (278 aa).

K9 is an active-site residue. 93-103 (PLGGGLGGGSS) is an ATP binding site. Residue D135 is part of the active site.

This sequence belongs to the GHMP kinase family. IspE subfamily.

It carries out the reaction 4-CDP-2-C-methyl-D-erythritol + ATP = 4-CDP-2-C-methyl-D-erythritol 2-phosphate + ADP + H(+). It functions in the pathway isoprenoid biosynthesis; isopentenyl diphosphate biosynthesis via DXP pathway; isopentenyl diphosphate from 1-deoxy-D-xylulose 5-phosphate: step 3/6. Catalyzes the phosphorylation of the position 2 hydroxy group of 4-diphosphocytidyl-2C-methyl-D-erythritol. The sequence is that of 4-diphosphocytidyl-2-C-methyl-D-erythritol kinase from Nitrosomonas europaea (strain ATCC 19718 / CIP 103999 / KCTC 2705 / NBRC 14298).